The chain runs to 149 residues: Calmodulin (149 aa).

A2 is subject to N-acetylalanine. 4 EF-hand domains span residues 8-43 (EQIA…LGQN), 44-79 (PTEA…KMKD), 81-116 (DTEE…LGEK), and 117-149 (LTDE…MMAK). Ca(2+)-binding residues include D21, D23, D25, T27, E32, D57, D59, N61, T63, E68, D94, D96, N98, and E105. An N6,N6,N6-trimethyllysine modification is found at K116. Ca(2+) contacts are provided by D130, D132, D134, H136, and E141.

This sequence belongs to the calmodulin family.

In terms of biological role, calmodulin mediates the control of a large number of enzymes, ion channels and other proteins by Ca(2+). Among the enzymes to be stimulated by the calmodulin-Ca(2+) complex are a number of protein kinases and phosphatases. The polypeptide is Calmodulin (Stylonychia lemnae (Ciliate)).